The sequence spans 420 residues: Signal recognition particle receptor FtsY (420 aa).

Basic and acidic residues predominate over residues 28-62 (DLDRAMGKVAPDNKKTRDAKAAADARLAAEAEEAK). A disordered region spans residues 28–118 (DLDRAMGKVA…PETPESVGSR (91 aa)). Low complexity predominate over residues 63–104 (AATAAEPAKSAESAKAEPAPAAQAEPEPAAAPKPESQPASKP). GTP is bound by residues 227 to 234 (GVNGTGKT), 310 to 314 (DTAGR), and 372 to 375 (SKLD).

It belongs to the GTP-binding SRP family. FtsY subfamily. Part of the signal recognition particle protein translocation system, which is composed of SRP and FtsY.

The protein localises to the cell membrane. It is found in the cytoplasm. It carries out the reaction GTP + H2O = GDP + phosphate + H(+). In terms of biological role, involved in targeting and insertion of nascent membrane proteins into the cytoplasmic membrane. Acts as a receptor for the complex formed by the signal recognition particle (SRP) and the ribosome-nascent chain (RNC). The chain is Signal recognition particle receptor FtsY from Bifidobacterium longum (strain NCC 2705).